Reading from the N-terminus, the 149-residue chain is DnaJ homolog subfamily C member 24 (149 aa).

The J domain occupies 11–82 (DWYSILGADP…ETKREYDLQR (72 aa)). Positions 93–148 (VDAQVYLEEMSWNEGDHSFYLSCRCGGKYSVSKDEAEEVSLISCDTCSLIIELLHY) constitute a DPH-type MB domain. Positions 115, 117, 136, and 139 each coordinate Zn(2+).

The protein belongs to the DPH4 family. As to quaternary structure, monomer and homooligomer. Iron binding promotes oligomerization.

Its subcellular location is the cytoplasm. The protein localises to the cytoskeleton. It functions in the pathway protein modification; peptidyl-diphthamide biosynthesis. Its function is as follows. Stimulates the ATPase activity of several Hsp70-type chaperones. This ability is enhanced by iron-binding. The iron-bound form is redox-active and can function as electron carrier. Plays a role in the diphthamide biosynthesis, a post-translational modification of histidine which occurs in translation elongation factor 2 (EEF2) which can be ADP-ribosylated by diphtheria toxin and by Pseudomonas exotoxin A (Eta). The polypeptide is DnaJ homolog subfamily C member 24 (Homo sapiens (Human)).